We begin with the raw amino-acid sequence, 271 residues long: Phycocyanobilin lyase subunit alpha (271 aa).

This sequence belongs to the CpcE/RpcE/PecE family. In terms of assembly, cpcE and CpcF associate to form a lyase.

Its function is as follows. Required for the chromophorylation of the cpcA1 gene product. The sequence is that of Phycocyanobilin lyase subunit alpha (cpcE1) from Pseudanabaena tenuis (strain PCC 7409).